The primary structure comprises 147 residues: Succinate dehydrogenase assembly factor 2, mitochondrial (147 aa).

The protein belongs to the SDHAF2 family. As to quaternary structure, interacts with the flavoprotein subunit within the SDH catalytic dimer.

It localises to the mitochondrion matrix. Its function is as follows. Plays an essential role in the assembly of succinate dehydrogenase (SDH), an enzyme complex (also referred to as respiratory complex II) that is a component of both the tricarboxylic acid (TCA) cycle and the mitochondrial electron transport chain, and which couples the oxidation of succinate to fumarate with the reduction of ubiquinone (coenzyme Q) to ubiquinol. Required for flavinylation (covalent attachment of FAD) of the flavoprotein subunit of the SDH catalytic dimer. This chain is Succinate dehydrogenase assembly factor 2, mitochondrial, found in Drosophila grimshawi (Hawaiian fruit fly).